Reading from the N-terminus, the 130-residue chain is Small ribosomal subunit protein uS8 (130 aa).

It belongs to the universal ribosomal protein uS8 family. Part of the 30S ribosomal subunit. Contacts proteins S5 and S12.

In terms of biological role, one of the primary rRNA binding proteins, it binds directly to 16S rRNA central domain where it helps coordinate assembly of the platform of the 30S subunit. The protein is Small ribosomal subunit protein uS8 of Pseudomonas aeruginosa (strain UCBPP-PA14).